The primary structure comprises 365 residues: Neuronal migration protein doublecortin (365 aa).

Residues 11 to 31 (RDKTSRNMRGSRMNGLPSPTH) form a disordered region. Thr14 carries the phosphothreonine; by PKC modification. Ser28 carries the phosphoserine; by CDK5 modification. Ser47 carries the post-translational modification Phosphoserine; by MARK1 and PKA. Doublecortin domains follow at residues 53-139 (KKVR…VEYT) and 180-263 (KLVT…AQDD). Tyr70 carries the phosphotyrosine; by ABL modification. The residue at position 74 (Ser74) is a Phosphoserine; by PKC. A Phosphoserine; by CK2 modification is found at Ser90. Ser110 is subject to Phosphoserine; by PKC. Ser115 is modified (phosphoserine; by CK2, MARK1 and PKA). Ser265 is modified (phosphoserine; by CK2). A disordered region spans residues 275–365 (KGNPSATAGP…DDSDSLGDSM (91 aa)). Ser287 bears the Phosphoserine; by CDK5 mark. Position 289 is a phosphothreonine; by CDK5 (Thr289). Phosphoserine; by PKC is present on Ser294. Ser297 carries the post-translational modification Phosphoserine; by CDK5. Residue Ser306 is modified to Phosphoserine; by CK2. Ser306 is modified (phosphoserine; by DYRK2). A compositionally biased stretch (polar residues) spans 307-341 (PADSGNDQDANGTSSSQLSTPKSKQSPISTPTSPG). Thr326 carries the post-translational modification Phosphothreonine; by CDK5. Phosphothreonine; by PKC and MAPK is present on Thr326. Ser332 carries the phosphoserine; by CDK5 modification. Ser332 is modified (phosphoserine; by MAPK). Thr336 is subject to Phosphothreonine; by MAPK. Phosphoserine; by CDK5 is present on Ser339. At Ser339 the chain carries Phosphoserine; by MAPK. Ser342 bears the Phosphoserine; by PKC mark. Phosphoserine; by CK2 is present on residues Ser354 and Ser360. Over residues 356–365 (DDSDSLGDSM) the composition is skewed to acidic residues.

As to quaternary structure, interacts with tubulin. Interacts with USP9X. In terms of processing, phosphorylation by MARK1, MARK2 and PKA regulates its ability to bind microtubules. Phosphorylation at Ser-265 and Ser-297 seems to occur only in neonatal brain, the levels falling precipitously by postnatal day 21. Ubiquitinated by MDM2, leading to its degradation by the proteasome. Ubiquitinated by MDM2 and subsequent degradation leads to reduce the dendritic spine density of olfactory bulb granule cells. In terms of tissue distribution, highly expressed in neuronal cells of fetal brain (in the majority of cells of the cortical plate, intermediate zone and ventricular zone), but not expressed in other fetal tissues. In the adult, highly expressed in the brain frontal lobe, but very low expression in other regions of brain, and not detected in heart, placenta, lung, liver, skeletal muscles, kidney and pancreas.

It is found in the cytoplasm. The protein resides in the cell projection. Its subcellular location is the neuron projection. Microtubule-associated protein required for initial steps of neuronal dispersion and cortex lamination during cerebral cortex development. May act by competing with the putative neuronal protein kinase DCLK1 in binding to a target protein. May in that way participate in a signaling pathway that is crucial for neuronal interaction before and during migration, possibly as part of a calcium ion-dependent signal transduction pathway. May be part with PAFAH1B1/LIS-1 of overlapping, but distinct, signaling pathways that promote neuronal migration. The protein is Neuronal migration protein doublecortin (DCX) of Homo sapiens (Human).